The following is a 557-amino-acid chain: MNKLRSSAITQGVQRSPNRSMLRAVGFNDEDFNKPIVGVANGYSTITPCNMGLNKLALKAEESIKRSGGMPQMFGTITVSDGISMGTEGMKYSLVSREVIADSIETACNAQSMDGVLAIGGCDKNMPGAMIAIARMNIPSIFIYGGTIKPGKLHGEDLTVVSAFEAVGQLTAGKINEERLIQVEKNCIPGAGSCGGMFTANTMSAVIEVLGLSLPHSSTMAAEDLEKELSADKSAEILVSAIEKDIRPLDLMTKKAFENAISVIMAIGGSTNAVLHILAIANTAGIDININDFERIRQKVPVICDLKPSGKYVTVDLHKAGGIPQVMKILLNAGLIHGDCKNIEGKTISEYLQNIPDKPPTNQNVIRDIDDPLYKKGHLAILKGNLASEGSVAKISGVKNPVLTGPAKIFESEEDCLKSILNNDIKAGDVVVIRNEGPVGGPGMREMLAPTSAIVGQGLGEKVALITDGRFSGGTYGLVVGHIAPEAAVGGNIALIKQGDLITVDAVKQLIEVDLSDEELEKRKKDWVKPIQKYKRGILSKYSRIVSTSSLGAVTDL.

A [2Fe-2S] cluster-binding site is contributed by Cys-49. A Mg(2+)-binding site is contributed by Asp-81. Cys-122 provides a ligand contact to [2Fe-2S] cluster. Residues Asp-123 and Lys-124 each coordinate Mg(2+). Lys-124 carries the N6-carboxylysine modification. Cys-194 provides a ligand contact to [2Fe-2S] cluster. Position 446 (Glu-446) interacts with Mg(2+). The active-site Proton acceptor is Ser-472.

It belongs to the IlvD/Edd family. Homodimer. Requires [2Fe-2S] cluster as cofactor. The cofactor is Mg(2+).

It catalyses the reaction (2R)-2,3-dihydroxy-3-methylbutanoate = 3-methyl-2-oxobutanoate + H2O. The enzyme catalyses (2R,3R)-2,3-dihydroxy-3-methylpentanoate = (S)-3-methyl-2-oxopentanoate + H2O. Its pathway is amino-acid biosynthesis; L-isoleucine biosynthesis; L-isoleucine from 2-oxobutanoate: step 3/4. It participates in amino-acid biosynthesis; L-valine biosynthesis; L-valine from pyruvate: step 3/4. Functions in the biosynthesis of branched-chain amino acids. Catalyzes the dehydration of (2R,3R)-2,3-dihydroxy-3-methylpentanoate (2,3-dihydroxy-3-methylvalerate) into 2-oxo-3-methylpentanoate (2-oxo-3-methylvalerate) and of (2R)-2,3-dihydroxy-3-methylbutanoate (2,3-dihydroxyisovalerate) into 2-oxo-3-methylbutanoate (2-oxoisovalerate), the penultimate precursor to L-isoleucine and L-valine, respectively. The sequence is that of Dihydroxy-acid dehydratase from Prochlorococcus marinus (strain MIT 9312).